A 338-amino-acid chain; its full sequence is tRNA N6-adenosine threonylcarbamoyltransferase (338 aa).

Fe cation contacts are provided by His111 and His115. Residues 134–138 (LVSGG), Asp167, Gly180, and Asn272 each bind substrate. Asp300 contributes to the Fe cation binding site.

It belongs to the KAE1 / TsaD family. Requires Fe(2+) as cofactor.

It is found in the cytoplasm. The catalysed reaction is L-threonylcarbamoyladenylate + adenosine(37) in tRNA = N(6)-L-threonylcarbamoyladenosine(37) in tRNA + AMP + H(+). In terms of biological role, required for the formation of a threonylcarbamoyl group on adenosine at position 37 (t(6)A37) in tRNAs that read codons beginning with adenine. Is involved in the transfer of the threonylcarbamoyl moiety of threonylcarbamoyl-AMP (TC-AMP) to the N6 group of A37, together with TsaE and TsaB. TsaD likely plays a direct catalytic role in this reaction. The protein is tRNA N6-adenosine threonylcarbamoyltransferase of Vibrio atlanticus (strain LGP32) (Vibrio splendidus (strain Mel32)).